The primary structure comprises 271 residues: Elongation factor Ts (271 aa).

Residues T76 to V79 are involved in Mg(2+) ion dislocation from EF-Tu.

It belongs to the EF-Ts family.

Its subcellular location is the cytoplasm. Functionally, associates with the EF-Tu.GDP complex and induces the exchange of GDP to GTP. It remains bound to the aminoacyl-tRNA.EF-Tu.GTP complex up to the GTP hydrolysis stage on the ribosome. This chain is Elongation factor Ts, found in Mycobacterium bovis (strain BCG / Pasteur 1173P2).